The primary structure comprises 223 residues: Translation initiation factor 6 (223 aa).

Belongs to the eIF-6 family.

Binds to the 50S ribosomal subunit and prevents its association with the 30S ribosomal subunit to form the 70S initiation complex. The protein is Translation initiation factor 6 of Sulfurisphaera tokodaii (strain DSM 16993 / JCM 10545 / NBRC 100140 / 7) (Sulfolobus tokodaii).